Reading from the N-terminus, the 215-residue chain is Large ribosomal subunit protein mL43 (215 aa).

This sequence belongs to the mitochondrion-specific ribosomal protein mL43 family. Component of the mitochondrial large ribosomal subunit (mt-LSU). Mature mammalian 55S mitochondrial ribosomes consist of a small (28S) and a large (39S) subunit. The 28S small subunit contains a 12S ribosomal RNA (12S mt-rRNA) and 30 different proteins. The 39S large subunit contains a 16S rRNA (16S mt-rRNA), a copy of mitochondrial valine transfer RNA (mt-tRNA(Val)), which plays an integral structural role, and 52 different proteins. High relative levels in skeletal muscle and testis. Lower levels of expression in the heart, brain, placenta, lung, liver, kidney, pancreas, spleen, thymus, prostate, ovary, small intestine, colon and leukocytes. Expression is coregulated with TWNK.

It localises to the mitochondrion. The protein is Large ribosomal subunit protein mL43 (MRPL43) of Homo sapiens (Human).